The primary structure comprises 417 residues: Gamma-glutamyl phosphate reductase (417 aa).

Belongs to the gamma-glutamyl phosphate reductase family.

It is found in the cytoplasm. It catalyses the reaction L-glutamate 5-semialdehyde + phosphate + NADP(+) = L-glutamyl 5-phosphate + NADPH + H(+). It participates in amino-acid biosynthesis; L-proline biosynthesis; L-glutamate 5-semialdehyde from L-glutamate: step 2/2. In terms of biological role, catalyzes the NADPH-dependent reduction of L-glutamate 5-phosphate into L-glutamate 5-semialdehyde and phosphate. The product spontaneously undergoes cyclization to form 1-pyrroline-5-carboxylate. In Legionella pneumophila (strain Corby), this protein is Gamma-glutamyl phosphate reductase.